Here is a 363-residue protein sequence, read N- to C-terminus: MDLRQQRKRDHVRLAAAWQERRPPPAAAGPGAGWEDVHLVNHSLPELALAEIDLTTSVAGVRLAQPVVINAMTGGADDVTAINRDLAAVAADLGLAMAVGSQTAGLRDPAVADSYRVVRRVNPKGIVLANVGSDATPEQARAAVEMVEADLLQIHLNAPQELRMPEGDRDFRGRLEAIARMVEEAPVPVVVKECGFGVSRDVAVLLHQAGVRAVDVSGRGGTNFAWIEDRRAGLSDPDPGLQNWGIPTACALAEVAALGLPELDLIASGGIRHGSDAAKALALGARAAAVAGPVLLRQQREGARGVMAYLQQFLTDLRAAMLLAGAGSVAAMGQVPVVVTGFTGEWCRLRGVDLMALANRSER.

7–8 (RK) serves as a coordination point for substrate. Residues 71 to 73 (AMT), serine 101, and asparagine 130 contribute to the FMN site. Glutamine 160 is a substrate binding site. Residue glutamate 161 participates in Mg(2+) binding. FMN-binding positions include lysine 192, serine 217, threonine 222, 270–272 (GIR), and 291–292 (AG).

Belongs to the IPP isomerase type 2 family. As to quaternary structure, homooctamer. Dimer of tetramers. It depends on FMN as a cofactor. NADPH serves as cofactor. The cofactor is Mg(2+).

The protein resides in the cytoplasm. The catalysed reaction is isopentenyl diphosphate = dimethylallyl diphosphate. Its function is as follows. Involved in the biosynthesis of isoprenoids. Catalyzes the 1,3-allylic rearrangement of the homoallylic substrate isopentenyl (IPP) to its allylic isomer, dimethylallyl diphosphate (DMAPP). The sequence is that of Isopentenyl-diphosphate delta-isomerase from Symbiobacterium thermophilum (strain DSM 24528 / JCM 14929 / IAM 14863 / T).